Consider the following 222-residue polypeptide: Large ribosomal subunit protein uL4 (222 aa).

Residues 50–72 (TRGRSEVSHSTKKPFRQKGTGNA) are disordered.

Belongs to the universal ribosomal protein uL4 family. Part of the 50S ribosomal subunit.

One of the primary rRNA binding proteins, this protein initially binds near the 5'-end of the 23S rRNA. It is important during the early stages of 50S assembly. It makes multiple contacts with different domains of the 23S rRNA in the assembled 50S subunit and ribosome. Its function is as follows. Forms part of the polypeptide exit tunnel. The polypeptide is Large ribosomal subunit protein uL4 (Chlamydia trachomatis serovar A (strain ATCC VR-571B / DSM 19440 / HAR-13)).